The chain runs to 249 residues: Derlin-2.1 (249 aa).

The Cytoplasmic portion of the chain corresponds to 1–21 (MAQAVEEWYRQMPIITRSYLT). The chain crosses the membrane as a helical span at residues 22–42 (AAVVTTVGCTLEIISPYHLYL). Over 43–96 (NPKLVVQHYEIWRLVTNFLYFRKMDLDFLFHMFFLARYCKLLEENSFRGRTADF) the chain is Lumenal. A helical membrane pass occupies residues 97–117 (FYMLLFGATVLTSIVLIGGMI). The Cytoplasmic portion of the chain corresponds to 118-122 (PYISE). The helical transmembrane segment at 123 to 143 (TFARILFLSNSLTFMMVYVWS) threads the bilayer. Residues 144–152 (KHNPFIHMS) lie on the Lumenal side of the membrane. Residues 153-173 (FLGLFTFTAAYLPWVLLGFSI) traverse the membrane as a helical segment. Residues 174-249 (LVGSSTWVDL…GAMGLDPQAQ (76 aa)) are Cytoplasmic-facing.

The protein belongs to the derlin family. In terms of tissue distribution, expressed in roots, stalks, leaves, embryo and endosperm.

It is found in the endoplasmic reticulum membrane. Its function is as follows. May be involved in the degradation process of specific misfolded endoplasmic reticulum (ER) luminal proteins. This Zea mays (Maize) protein is Derlin-2.1 (DER2.1).